Consider the following 359-residue polypeptide: Gene 58 protein (359 aa).

The next 11 helical transmembrane spans lie at 12–32 (TMAA…CFLF), 45–65 (VDEL…FFCF), 75–95 (YLDL…ICLQ), 103–123 (YLPI…PVTF), 132–152 (YANA…YLLL), 154–174 (FGSV…IAGL), 220–240 (LCVV…AGVY), 246–266 (VLKT…GMGY), 271–289 (ATFV…VFVL), 296–318 (SVLF…TIML), and 330–350 (IVLS…NVLY).

Belongs to the herpesviridae BMRF2 family.

The protein localises to the host membrane. The polypeptide is Gene 58 protein (58) (Equine herpesvirus 2 (strain 86/87) (EHV-2)).